Consider the following 578-residue polypeptide: Phosphatase DCR2 (578 aa).

ATP is bound at residue Gly-116–Ser-123.

It is found in the cytoplasm. Its function is as follows. Required for cell cycle progression. Has a role in the completion of START. The protein is Phosphatase DCR2 (DCR2) of Saccharomyces cerevisiae (strain ATCC 204508 / S288c) (Baker's yeast).